We begin with the raw amino-acid sequence, 196 residues long: Putative adenylate kinase (196 aa).

ATP contacts are provided by Gly-10, Gly-12, Lys-13, Thr-14, and Ser-15. The NMP stretch occupies residues 30–53 (YLNDLIKEEHLYSEVDEERDSVIA). The interval 118 to 128 (KRGYSEEKINE) is LID. Position 119 (Arg-119) interacts with ATP.

The protein belongs to the adenylate kinase family. AK6 subfamily. Interacts with uS11. Not a structural component of 40S pre-ribosomes, but transiently interacts with them by binding to uS11.

The catalysed reaction is AMP + ATP = 2 ADP. The enzyme catalyses ATP + H2O = ADP + phosphate + H(+). Broad-specificity nucleoside monophosphate (NMP) kinase that catalyzes the reversible transfer of the terminal phosphate group between nucleoside triphosphates and monophosphates. Also has ATPase activity. Involved in the late maturation steps of the 30S ribosomal particles, specifically 16S rRNA maturation. While NMP activity is not required for ribosome maturation, ATPase activity is. Associates transiently with small ribosomal subunit protein uS11. ATP hydrolysis breaks the interaction with uS11. May temporarily remove uS11 from the ribosome to enable a conformational change of the ribosomal RNA that is needed for the final maturation step of the small ribosomal subunit. The protein is Putative adenylate kinase of Methanosarcina mazei (strain ATCC BAA-159 / DSM 3647 / Goe1 / Go1 / JCM 11833 / OCM 88) (Methanosarcina frisia).